The primary structure comprises 223 residues: Adenylate kinase (223 aa).

ATP is bound at residue 10–15 (GSGKGT). The interval 30 to 59 (ESGAIFRKHIGGGTELGMKAKEYIDKGELV) is NMP. Residues Ser31, Arg36, 57-59 (ELV), 84-87 (GFPR), and Gln91 each bind AMP. The segment at 125–164 (GRRLCENDPNHPNNKFIDAIKPDGDKCRVCGGALSERADD) is LID. ATP is bound at residue Arg126. AMP-binding residues include Arg161 and Arg173. Position 209 (Gly209) interacts with ATP.

It belongs to the adenylate kinase family. In terms of assembly, monomer.

Its subcellular location is the cytoplasm. It catalyses the reaction AMP + ATP = 2 ADP. It participates in purine metabolism; AMP biosynthesis via salvage pathway; AMP from ADP: step 1/1. Catalyzes the reversible transfer of the terminal phosphate group between ATP and AMP. Plays an important role in cellular energy homeostasis and in adenine nucleotide metabolism. This chain is Adenylate kinase, found in Maridesulfovibrio salexigens (strain ATCC 14822 / DSM 2638 / NCIMB 8403 / VKM B-1763) (Desulfovibrio salexigens).